The sequence spans 252 residues: uncharacterized protein (252 aa).

A helical transmembrane segment spans residues 80-100 (LSVLVIGSTMFTHAGVLPVLA).

It is found in the host membrane. The protein resides in the virion. This is an uncharacterized protein from Acanthamoeba polyphaga mimivirus (APMV).